A 139-amino-acid chain; its full sequence is Nuclear transcription factor Y subunit B-4 (139 aa).

Residues 8–14 (LPIANVG) mediate DNA binding. Positions 35-46 (VQECATEFISFV) are subunit association domain (SAD). The span at 90-115 (YREAERERTEHNKGSNDSGNEKETNT) shows a compositional bias: basic and acidic residues. The tract at residues 90–139 (YREAERERTEHNKGSNDSGNEKETNTRSDVQNQSTKFIRVVEKGSSSSAR) is disordered. The span at 116–125 (RSDVQNQSTK) shows a compositional bias: polar residues.

Belongs to the NFYB/HAP3 subunit family. In terms of assembly, heterotrimeric transcription factor composed of three components, NF-YA, NF-YB and NF-YC. NF-YB and NF-YC must interact and dimerize for NF-YA association and DNA binding. Expressed in flowers, siliques and young rosettes.

The protein localises to the nucleus. Component of the NF-Y/HAP transcription factor complex. The NF-Y complex stimulates the transcription of various genes by recognizing and binding to a CCAAT motif in promoters. The chain is Nuclear transcription factor Y subunit B-4 (NFYB4) from Arabidopsis thaliana (Mouse-ear cress).